Here is a 337-residue protein sequence, read N- to C-terminus: Thiazole synthase (337 aa).

Residues 1–41 (MSQHPLRPAGSRPGDSPPDGSCPDGLAGGGSAVGGGGGGEA) form a disordered region. Over residues 10 to 25 (GSRPGDSPPDGSCPDG) the composition is skewed to low complexity. The segment covering 26 to 41 (LAGGGSAVGGGGGGEA) has biased composition (gly residues). Lysine 144 serves as the catalytic Schiff-base intermediate with DXP. 1-deoxy-D-xylulose 5-phosphate-binding positions include glycine 205, 231-232 (AG), and 253-254 (NT). The tract at residues 302-337 (FLGAHPSPASHPSPASPVPSVSRATSPAAVVGEASR) is disordered. Residues 319 to 337 (VPSVSRATSPAAVVGEASR) are compositionally biased toward low complexity.

Belongs to the ThiG family. Homotetramer. Forms heterodimers with either ThiH or ThiS.

Its subcellular location is the cytoplasm. It catalyses the reaction [ThiS sulfur-carrier protein]-C-terminal-Gly-aminoethanethioate + 2-iminoacetate + 1-deoxy-D-xylulose 5-phosphate = [ThiS sulfur-carrier protein]-C-terminal Gly-Gly + 2-[(2R,5Z)-2-carboxy-4-methylthiazol-5(2H)-ylidene]ethyl phosphate + 2 H2O + H(+). It participates in cofactor biosynthesis; thiamine diphosphate biosynthesis. In terms of biological role, catalyzes the rearrangement of 1-deoxy-D-xylulose 5-phosphate (DXP) to produce the thiazole phosphate moiety of thiamine. Sulfur is provided by the thiocarboxylate moiety of the carrier protein ThiS. In vitro, sulfur can be provided by H(2)S. This Frankia casuarinae (strain DSM 45818 / CECT 9043 / HFP020203 / CcI3) protein is Thiazole synthase.